Consider the following 444-residue polypeptide: NADH-ubiquinone oxidoreductase chain 4 (444 aa).

A run of 13 helical transmembrane segments spans residues 4–24 (YLFM…WWLV), 28–48 (IFLL…LSMI), 53–73 (GVDF…CLMI), 87–107 (NFFV…FSSL), 109–129 (LFSF…LILG), 141–161 (VYLM…LFSI), 173–193 (LIDF…AFLV), 212–232 (PISG…YGIF), 245–265 (FNYF…FVCF), 272–294 (SLIA…TMNW), 306–326 (GHGI…ELLG), 330–350 (LLIN…WFLL), and 373–393 (IISW…FSAV).

It belongs to the complex I subunit 4 family.

The protein localises to the mitochondrion membrane. It carries out the reaction a ubiquinone + NADH + 5 H(+)(in) = a ubiquinol + NAD(+) + 4 H(+)(out). Core subunit of the mitochondrial membrane respiratory chain NADH dehydrogenase (Complex I) that is believed to belong to the minimal assembly required for catalysis. Complex I functions in the transfer of electrons from NADH to the respiratory chain. The immediate electron acceptor for the enzyme is believed to be ubiquinone. In Locusta migratoria (Migratory locust), this protein is NADH-ubiquinone oxidoreductase chain 4 (ND4).